A 208-amino-acid chain; its full sequence is Calcyphosin-like protein (208 aa).

EF-hand domains follow at residues 39–74 (AGIKGLGRVFRIMDDDNNRTLDFKEFMKGLNDYAVV), 75–110 (MEKEEVEELFRRFDKDGNGTIDFNEFLLTLRPPMSR), 111–146 (ARKEVIMQAFRKLDKTGDGVITIEDLREVYNAKHHP), and 154–191 (SEEQVFRKFLDNFDSPYDKDGLVTPEEFMNYYAGVSAS). Residues aspartate 52, aspartate 54, asparagine 56, threonine 58, glutamate 63, aspartate 88, aspartate 90, asparagine 92, threonine 94, and glutamate 99 each coordinate Ca(2+).

The protein localises to the cytoplasm. This is Calcyphosin-like protein (CAPSL) from Homo sapiens (Human).